The primary structure comprises 172 residues: Peptidyl-prolyl cis-trans isomerase (172 aa).

Residues 10 to 168 form the PPIase cyclophilin-type domain; sequence YFDVYANEES…YRIEIRDCGV (159 aa).

Belongs to the cyclophilin-type PPIase family.

Its subcellular location is the cytoplasm. It carries out the reaction [protein]-peptidylproline (omega=180) = [protein]-peptidylproline (omega=0). Its function is as follows. PPIases accelerate the folding of proteins. They catalyze the cis-trans isomerization of proline imidic peptide bonds in oligopeptides. The chain is Peptidyl-prolyl cis-trans isomerase (CPR1) from Encephalitozoon cuniculi (strain GB-M1) (Microsporidian parasite).